We begin with the raw amino-acid sequence, 598 residues long: Elongation factor 4 (598 aa).

Positions 4 to 186 (SRLRNFSIIA…EIVKKIPPPK (183 aa)) constitute a tr-type G domain. GTP-binding positions include 16-21 (DHGKST) and 133-136 (NKID).

Belongs to the TRAFAC class translation factor GTPase superfamily. Classic translation factor GTPase family. LepA subfamily.

The protein resides in the cell inner membrane. It catalyses the reaction GTP + H2O = GDP + phosphate + H(+). Its function is as follows. Required for accurate and efficient protein synthesis under certain stress conditions. May act as a fidelity factor of the translation reaction, by catalyzing a one-codon backward translocation of tRNAs on improperly translocated ribosomes. Back-translocation proceeds from a post-translocation (POST) complex to a pre-translocation (PRE) complex, thus giving elongation factor G a second chance to translocate the tRNAs correctly. Binds to ribosomes in a GTP-dependent manner. This chain is Elongation factor 4, found in Pelobacter propionicus (strain DSM 2379 / NBRC 103807 / OttBd1).